We begin with the raw amino-acid sequence, 207 residues long: Ribosomal RNA large subunit methyltransferase E (207 aa).

Positions 1–20 (MKRDPTKGRKTPDHYARKAK) are disordered. Residues G56, W58, D76, D94, and D116 each contribute to the S-adenosyl-L-methionine site. K156 serves as the catalytic Proton acceptor.

Belongs to the class I-like SAM-binding methyltransferase superfamily. RNA methyltransferase RlmE family.

It is found in the cytoplasm. The enzyme catalyses uridine(2552) in 23S rRNA + S-adenosyl-L-methionine = 2'-O-methyluridine(2552) in 23S rRNA + S-adenosyl-L-homocysteine + H(+). Its function is as follows. Specifically methylates the uridine in position 2552 of 23S rRNA at the 2'-O position of the ribose in the fully assembled 50S ribosomal subunit. The protein is Ribosomal RNA large subunit methyltransferase E of Desulfosudis oleivorans (strain DSM 6200 / JCM 39069 / Hxd3) (Desulfococcus oleovorans).